We begin with the raw amino-acid sequence, 321 residues long: Lipoyl synthase (321 aa).

7 residues coordinate [4Fe-4S] cluster: cysteine 68, cysteine 73, cysteine 79, cysteine 94, cysteine 98, cysteine 101, and serine 308. The 218-residue stretch at 80–297 (FNHGTATFMI…KAEALAMGFT (218 aa)) folds into the Radical SAM core domain.

The protein belongs to the radical SAM superfamily. Lipoyl synthase family. It depends on [4Fe-4S] cluster as a cofactor.

It is found in the cytoplasm. The enzyme catalyses [[Fe-S] cluster scaffold protein carrying a second [4Fe-4S](2+) cluster] + N(6)-octanoyl-L-lysyl-[protein] + 2 oxidized [2Fe-2S]-[ferredoxin] + 2 S-adenosyl-L-methionine + 4 H(+) = [[Fe-S] cluster scaffold protein] + N(6)-[(R)-dihydrolipoyl]-L-lysyl-[protein] + 4 Fe(3+) + 2 hydrogen sulfide + 2 5'-deoxyadenosine + 2 L-methionine + 2 reduced [2Fe-2S]-[ferredoxin]. The protein operates within protein modification; protein lipoylation via endogenous pathway; protein N(6)-(lipoyl)lysine from octanoyl-[acyl-carrier-protein]: step 2/2. Functionally, catalyzes the radical-mediated insertion of two sulfur atoms into the C-6 and C-8 positions of the octanoyl moiety bound to the lipoyl domains of lipoate-dependent enzymes, thereby converting the octanoylated domains into lipoylated derivatives. The chain is Lipoyl synthase from Salmonella arizonae (strain ATCC BAA-731 / CDC346-86 / RSK2980).